We begin with the raw amino-acid sequence, 402 residues long: 4-hydroxy-3-methylbut-2-enyl diphosphate reductase (402 aa).

Residue C66 coordinates [4Fe-4S] cluster. H96 is a binding site for (2E)-4-hydroxy-3-methylbut-2-enyl diphosphate. Dimethylallyl diphosphate is bound at residue H96. H96 provides a ligand contact to isopentenyl diphosphate. C157 contributes to the [4Fe-4S] cluster binding site. A (2E)-4-hydroxy-3-methylbut-2-enyl diphosphate-binding site is contributed by H185. A dimethylallyl diphosphate-binding site is contributed by H185. H185 lines the isopentenyl diphosphate pocket. The active-site Proton donor is the E187. T250 serves as a coordination point for (2E)-4-hydroxy-3-methylbut-2-enyl diphosphate. C288 lines the [4Fe-4S] cluster pocket. The (2E)-4-hydroxy-3-methylbut-2-enyl diphosphate site is built by S317, S318, N319, and S379. Dimethylallyl diphosphate is bound by residues S317, S318, N319, and S379. S317, S318, N319, and S379 together coordinate isopentenyl diphosphate.

The protein belongs to the IspH family. Requires [4Fe-4S] cluster as cofactor.

It carries out the reaction isopentenyl diphosphate + 2 oxidized [2Fe-2S]-[ferredoxin] + H2O = (2E)-4-hydroxy-3-methylbut-2-enyl diphosphate + 2 reduced [2Fe-2S]-[ferredoxin] + 2 H(+). It catalyses the reaction dimethylallyl diphosphate + 2 oxidized [2Fe-2S]-[ferredoxin] + H2O = (2E)-4-hydroxy-3-methylbut-2-enyl diphosphate + 2 reduced [2Fe-2S]-[ferredoxin] + 2 H(+). The protein operates within isoprenoid biosynthesis; dimethylallyl diphosphate biosynthesis; dimethylallyl diphosphate from (2E)-4-hydroxy-3-methylbutenyl diphosphate: step 1/1. Its pathway is isoprenoid biosynthesis; isopentenyl diphosphate biosynthesis via DXP pathway; isopentenyl diphosphate from 1-deoxy-D-xylulose 5-phosphate: step 6/6. In terms of biological role, catalyzes the conversion of 1-hydroxy-2-methyl-2-(E)-butenyl 4-diphosphate (HMBPP) into a mixture of isopentenyl diphosphate (IPP) and dimethylallyl diphosphate (DMAPP). Acts in the terminal step of the DOXP/MEP pathway for isoprenoid precursor biosynthesis. This chain is 4-hydroxy-3-methylbut-2-enyl diphosphate reductase, found in Nostoc sp. (strain PCC 7120 / SAG 25.82 / UTEX 2576).